We begin with the raw amino-acid sequence, 1071 residues long: Carbamoyl phosphate synthase large chain (1071 aa).

Residues 1-403 are carboxyphosphate synthetic domain; the sequence is MPKRTDLKSI…SFQKALRGLE (403 aa). ATP-binding residues include Arg129, Arg169, Gly175, Gly176, Gln208, Val210, Glu215, Gly241, Val242, His243, Gln285, and Glu299. In terms of domain architecture, ATP-grasp 1 spans 133-328; that stretch reads KEAMEKIGLS…IAKVAAKLAV (196 aa). Residues Gln285, Glu299, and Asn301 each contribute to the Mg(2+) site. Positions 285, 299, and 301 each coordinate Mn(2+). The oligomerization domain stretch occupies residues 404 to 548; the sequence is TGLCGFNPRS…YSTYEEECEA (145 aa). Residues 549-930 form a carbamoyl phosphate synthetic domain region; that stretch reads RPSDRKKVMI…AYYKAQLGAG (382 aa). An ATP-grasp 2 domain is found at 673–864; it reads QKVLNDLGLR…LAKVGARCMA (192 aa). 10 residues coordinate ATP: Arg709, Phe748, Leu750, Glu755, Gly780, Ile781, His782, Ser783, Gln823, and Glu835. Gln823, Glu835, and Asn837 together coordinate Mg(2+). The Mn(2+) site is built by Gln823, Glu835, and Asn837. Positions 931–1071 constitute an MGS-like domain; that stretch reads ERLNPTGKIF…ELHGRLKNRS (141 aa). An allosteric domain region spans residues 931-1071; that stretch reads ERLNPTGKIF…ELHGRLKNRS (141 aa).

This sequence belongs to the CarB family. In terms of assembly, composed of two chains; the small (or glutamine) chain promotes the hydrolysis of glutamine to ammonia, which is used by the large (or ammonia) chain to synthesize carbamoyl phosphate. Tetramer of heterodimers (alpha,beta)4. It depends on Mg(2+) as a cofactor. Mn(2+) serves as cofactor.

The enzyme catalyses hydrogencarbonate + L-glutamine + 2 ATP + H2O = carbamoyl phosphate + L-glutamate + 2 ADP + phosphate + 2 H(+). The catalysed reaction is hydrogencarbonate + NH4(+) + 2 ATP = carbamoyl phosphate + 2 ADP + phosphate + 2 H(+). It functions in the pathway amino-acid biosynthesis; L-arginine biosynthesis; carbamoyl phosphate from bicarbonate: step 1/1. Its pathway is pyrimidine metabolism; UMP biosynthesis via de novo pathway; (S)-dihydroorotate from bicarbonate: step 1/3. Functionally, large subunit of the glutamine-dependent carbamoyl phosphate synthetase (CPSase). CPSase catalyzes the formation of carbamoyl phosphate from the ammonia moiety of glutamine, carbonate, and phosphate donated by ATP, constituting the first step of 2 biosynthetic pathways, one leading to arginine and/or urea and the other to pyrimidine nucleotides. The large subunit (synthetase) binds the substrates ammonia (free or transferred from glutamine from the small subunit), hydrogencarbonate and ATP and carries out an ATP-coupled ligase reaction, activating hydrogencarbonate by forming carboxy phosphate which reacts with ammonia to form carbamoyl phosphate. The sequence is that of Carbamoyl phosphate synthase large chain from Neisseria meningitidis serogroup A / serotype 4A (strain DSM 15465 / Z2491).